A 220-amino-acid polypeptide reads, in one-letter code: SAGA-associated factor 11 homolog (220 aa).

Positions Met1–Thr38 are disordered. The segment at Cys126–Cys147 adopts an SGF11-type zinc-finger fold. Composition is skewed to low complexity over residues Arg160–Ser177 and Ser204–Phe220. The disordered stretch occupies residues Arg160–Phe220.

It belongs to the SGF11 family. Component of some SAGA transcription coactivator-HAT complexes. Within the SAGA complex, participates in a subcomplex of SAGA called the DUB module (deubiquitination module).

The protein resides in the nucleus. Component of the transcription regulatory histone acetylation (HAT) complex SAGA, a multiprotein complex that activates transcription by remodeling chromatin and mediating histone acetylation and deubiquitination. Within the SAGA complex, participates in a subcomplex that specifically deubiquitinates histone H2B. The SAGA complex is recruited to specific gene promoters by activators, where it is required for transcription. The protein is SAGA-associated factor 11 homolog of Musca domestica (House fly).